The chain runs to 285 residues: 2-hydroxy-6-oxononadienedioate/2-hydroxy-6-oxononatrienedioate hydrolase 1 (285 aa).

The active-site Proton acceptor is histidine 265.

Belongs to the AB hydrolase superfamily. MhpC family. In terms of assembly, homodimer.

It catalyses the reaction (2Z,4E)-2-hydroxy-6-oxonona-2,4-dienedioate + H2O = (2Z)-2-hydroxypenta-2,4-dienoate + succinate + H(+). It carries out the reaction (2Z,4E,7E)-2-hydroxy-6-oxonona-2,4,7-trienedioate + H2O = (2Z)-2-hydroxypenta-2,4-dienoate + fumarate + H(+). It participates in aromatic compound metabolism; 3-phenylpropanoate degradation. Its function is as follows. Catalyzes the cleavage of the C5-C6 bond of 2-hydroxy-6-oxononadienedioate and 2-hydroxy-6-oxononatrienedioate, a dienol ring fission product of the bacterial meta-cleavage pathway for degradation of phenylpropionic acid. The polypeptide is 2-hydroxy-6-oxononadienedioate/2-hydroxy-6-oxononatrienedioate hydrolase 1 (Pseudomonas putida (Arthrobacter siderocapsulatus)).